Consider the following 76-residue polypeptide: uncharacterized protein (76 aa).

To K.pneumoniae LtrA, E.coli YjiE, and YhcS.

This is an uncharacterized protein from Escherichia coli O6:H1 (strain CFT073 / ATCC 700928 / UPEC).